The primary structure comprises 81 residues: MSHSVKVYDTCIGCTQCVRACPCDVLEMVSWDGCKAGQIASAPRTEDCIGCKRCETACPTDFLSVRVYLGGETTRSMGLAY.

4Fe-4S ferredoxin-type domains follow at residues 2–31 (SHSV…MVSW) and 39–68 (IASA…VRVY). C11, C14, C17, C21, C48, C51, C54, and C58 together coordinate [4Fe-4S] cluster.

As to quaternary structure, the eukaryotic PSI reaction center is composed of at least 11 subunits. Requires [4Fe-4S] cluster as cofactor.

It is found in the plastid. Its subcellular location is the chloroplast thylakoid membrane. It catalyses the reaction reduced [plastocyanin] + hnu + oxidized [2Fe-2S]-[ferredoxin] = oxidized [plastocyanin] + reduced [2Fe-2S]-[ferredoxin]. Apoprotein for the two 4Fe-4S centers FA and FB of photosystem I (PSI); essential for photochemical activity. FB is the terminal electron acceptor of PSI, donating electrons to ferredoxin. The C-terminus interacts with PsaA/B/D and helps assemble the protein into the PSI complex. Required for binding of PsaD and PsaE to PSI. PSI is a plastocyanin/cytochrome c6-ferredoxin oxidoreductase, converting photonic excitation into a charge separation, which transfers an electron from the donor P700 chlorophyll pair to the spectroscopically characterized acceptors A0, A1, FX, FA and FB in turn. The polypeptide is Photosystem I iron-sulfur center (Rhodomonas salina (Cryptomonas salina)).